The chain runs to 314 residues: UDP-glucose 4-epimerase (314 aa).

Residues 11–12 (FI), 31–36 (DNFATG), 56–57 (DI), and 77–81 (LAAQI) each bind NAD(+). S121 and Y146 together coordinate substrate. Residues Y146 and K150 each coordinate NAD(+). Y146 (proton acceptor) is an active-site residue. Residues N175, 189–190 (VV), 204–206 (RVF), R213, and 271–274 (RLGD) contribute to the substrate site.

It belongs to the NAD(P)-dependent epimerase/dehydratase family. In terms of assembly, homodimer. The cofactor is NAD(+).

It carries out the reaction UDP-alpha-D-glucose = UDP-alpha-D-galactose. It functions in the pathway carbohydrate metabolism; galactose metabolism. Involved in the metabolism of galactose. Catalyzes the conversion of UDP-galactose (UDP-Gal) to UDP-glucose (UDP-Glc) through a mechanism involving the transient reduction of NAD. The protein is UDP-glucose 4-epimerase (galE1) of Mycobacterium tuberculosis (strain CDC 1551 / Oshkosh).